A 77-amino-acid polypeptide reads, in one-letter code: U8-lycotoxin-Ls1l (77 aa).

The signal sequence occupies residues Met-1–Ala-20. A propeptide spanning residues Gln-21–Lys-26 is cleaved from the precursor.

This sequence belongs to the neurotoxin 19 (CSTX) family. 08 (U8-Lctx) subfamily. Post-translationally, contains 4 disulfide bonds. Expressed by the venom gland.

It localises to the secreted. The sequence is that of U8-lycotoxin-Ls1l from Lycosa singoriensis (Wolf spider).